The following is a 790-amino-acid chain: Potassium transporter 22 (790 aa).

Over methionine 1–arginine 64 the chain is Cytoplasmic. A helical membrane pass occupies residues leucine 65–tyrosine 85. Residues serine 86 to aspartate 98 are Extracellular-facing. A helical membrane pass occupies residues leucine 99–valine 119. The Cytoplasmic segment spans residues tyrosine 120 to arginine 198. A helical membrane pass occupies residues isoleucine 199 to threonine 219. Topologically, residues proline 220 to proline 236 are extracellular. The helical transmembrane segment at histidine 237–valine 257 threads the bilayer. The Cytoplasmic segment spans residues glutamine 258–lysine 264. Residues valine 265–valine 285 traverse the membrane as a helical segment. Topologically, residues tyrosine 286 to serine 318 are extracellular. The chain crosses the membrane as a helical span at residues leucine 319–phenylalanine 339. The Cytoplasmic portion of the chain corresponds to serine 340 to glutamine 345. The chain crosses the membrane as a helical span at residues leucine 346 to tyrosine 366. Residues leucine 367–valine 385 are Extracellular-facing. Residues leucine 386–isoleucine 406 traverse the membrane as a helical segment. At serine 407–glutamine 437 the chain is on the cytoplasmic side. The chain crosses the membrane as a helical span at residues valine 438–alanine 458. Residues arginine 459–glycine 469 are Extracellular-facing. Residues isoleucine 470 to valine 490 traverse the membrane as a helical segment. Residues tryptophan 491–arginine 492 lie on the Cytoplasmic side of the membrane. The helical transmembrane segment at valine 493–leucine 513 threads the bilayer. The Extracellular segment spans residues threonine 514–lysine 519. A helical membrane pass occupies residues phenylalanine 520–valine 540. Over tryptophan 541–isoleucine 790 the chain is Cytoplasmic.

It belongs to the HAK/KUP transporter (TC 2.A.72.3) family.

The protein localises to the membrane. In terms of biological role, high-affinity potassium transporter. The protein is Potassium transporter 22 (HAK22) of Oryza sativa subsp. japonica (Rice).